The chain runs to 140 residues: Nucleoside diphosphate kinase (140 aa).

K11, F59, R87, T93, R104, and N114 together coordinate ATP. H117 (pros-phosphohistidine intermediate) is an active-site residue.

This sequence belongs to the NDK family. In terms of assembly, homotetramer. Mg(2+) is required as a cofactor.

It localises to the cytoplasm. It catalyses the reaction a 2'-deoxyribonucleoside 5'-diphosphate + ATP = a 2'-deoxyribonucleoside 5'-triphosphate + ADP. The enzyme catalyses a ribonucleoside 5'-diphosphate + ATP = a ribonucleoside 5'-triphosphate + ADP. Its function is as follows. Major role in the synthesis of nucleoside triphosphates other than ATP. The ATP gamma phosphate is transferred to the NDP beta phosphate via a ping-pong mechanism, using a phosphorylated active-site intermediate. The sequence is that of Nucleoside diphosphate kinase from Granulibacter bethesdensis (strain ATCC BAA-1260 / CGDNIH1).